The primary structure comprises 132 residues: Small ribosomal subunit protein uS8c (132 aa).

The protein belongs to the universal ribosomal protein uS8 family. As to quaternary structure, part of the 30S ribosomal subunit.

The protein localises to the plastid. Its subcellular location is the chloroplast. One of the primary rRNA binding proteins, it binds directly to 16S rRNA central domain where it helps coordinate assembly of the platform of the 30S subunit. This chain is Small ribosomal subunit protein uS8c (rps8), found in Nymphaea alba (White water-lily).